The sequence spans 871 residues: Serrate RNA effector molecule homolog (871 aa).

The disordered stretch occupies residues 1–90 (MGDSDDEYDR…RRDWDGHSSD (90 aa)). The residue at position 2 (glycine 2) is an N-acetylglycine. Position 4 is a phosphoserine (serine 4). Tyrosine 8 is subject to Phosphotyrosine. A compositionally biased stretch (basic and acidic residues) spans 8–73 (YDRRRRDKFR…ERFSPPRHEL (66 aa)). Residues serine 67, serine 74, and serine 136 each carry the phosphoserine modification. A Glycyl lysine isopeptide (Lys-Gly) (interchain with G-Cter in SUMO2) cross-link involves residue lysine 150. Residues 272-411 (EEEEQAGKPG…KPKDAAGLEC (140 aa)) are disordered. Over residues 297 to 347 (DGERKTNDKDEKKEDSKQAENDSSNDDKTKKSEGDGDKEEKKEDSEKEAKK) the composition is skewed to basic and acidic residues. Over residues 370–385 (SESESESGQAEEEKEE) the composition is skewed to acidic residues. Residues 386–411 (AEALKEKEKPKEEEWEKPKDAAGLEC) show a composition bias toward basic and acidic residues. 2 positions are modified to phosphoserine: serine 492 and serine 539. Phosphothreonine is present on threonine 543. Position 569 is a phosphoserine (serine 569). Residues 574–597 (ELLGSSGGAPPEEPPKEGNPAEIN) are disordered. Phosphothreonine is present on threonine 670. A Phosphoserine modification is found at serine 678. An omega-N-methylarginine mark is found at arginine 828, arginine 835, and arginine 845. A disordered region spans residues 830–849 (NYDAFRGQGGYPGKPRNRMV).

The protein belongs to the ARS2 family. As to quaternary structure, interacts with CASP8AP2, ERBB4, NCBP1/CBP80 and DROSHA. Interacts with LUZP4. Interacts with NCBP2/CBP20 and NCBP3. Interacts with MTREX.

The protein localises to the nucleus. It localises to the nucleoplasm. It is found in the cytoplasm. In terms of biological role, acts as a mediator between the cap-binding complex (CBC) and the primary microRNAs (miRNAs) processing machinery during cell proliferation. Contributes to the stability and delivery of capped primary miRNA transcripts to the primary miRNA processing complex containing DGCR8 and DROSHA, thereby playing a role in RNA-mediated gene silencing (RNAi) by miRNAs. Binds capped RNAs (m7GpppG-capped RNA); however interaction is probably mediated via its interaction with NCBP1/CBP80 component of the CBC complex. Involved in cell cycle progression at S phase. Does not directly confer arsenite resistance but rather modulates arsenic sensitivity. Independently of its activity on miRNAs, necessary and sufficient to promote neural stem cell self-renewal. Does so by directly binding SOX2 promoter and positively regulating its transcription. In Pongo abelii (Sumatran orangutan), this protein is Serrate RNA effector molecule homolog (SRRT).